Here is a 227-residue protein sequence, read N- to C-terminus: PKHD-type hydroxylase Reut_B4660 (227 aa).

The Fe2OG dioxygenase domain occupies 78-178; it reads KVFPPLFNRY…RVSSFFWIQS (101 aa). Residues His96, Asp98, and His159 each coordinate Fe cation. Arg169 contributes to the 2-oxoglutarate binding site.

Requires Fe(2+) as cofactor. L-ascorbate is required as a cofactor.

This is PKHD-type hydroxylase Reut_B4660 from Cupriavidus pinatubonensis (strain JMP 134 / LMG 1197) (Cupriavidus necator (strain JMP 134)).